A 379-amino-acid polypeptide reads, in one-letter code: Chaperone protein DnaJ (379 aa).

The region spanning 5–69 (DYYEVLGISK…NKRATIDQFG (65 aa)) is the J domain. The CR-type zinc finger occupies 136 to 218 (GTTKEISIRK…CHGKGTENKT (83 aa)). Zn(2+)-binding residues include C149, C152, C166, C169, C192, C195, C206, and C209. CXXCXGXG motif repeat units lie at residues 149–156 (CETCHGDG), 166–173 (CSYCNGAG), 192–199 (CPKCNGSG), and 206–213 (CPTCHGKG).

Belongs to the DnaJ family. Homodimer. It depends on Zn(2+) as a cofactor.

The protein resides in the cytoplasm. Its function is as follows. Participates actively in the response to hyperosmotic and heat shock by preventing the aggregation of stress-denatured proteins and by disaggregating proteins, also in an autonomous, DnaK-independent fashion. Unfolded proteins bind initially to DnaJ; upon interaction with the DnaJ-bound protein, DnaK hydrolyzes its bound ATP, resulting in the formation of a stable complex. GrpE releases ADP from DnaK; ATP binding to DnaK triggers the release of the substrate protein, thus completing the reaction cycle. Several rounds of ATP-dependent interactions between DnaJ, DnaK and GrpE are required for fully efficient folding. Also involved, together with DnaK and GrpE, in the DNA replication of plasmids through activation of initiation proteins. The polypeptide is Chaperone protein DnaJ (Staphylococcus aureus).